The sequence spans 346 residues: MVQESTMICVDNSEYMRNGDFQPTRLQSQQDAVNLVTQCKLRANPENAVGILSMANSVQVLSSLSTEQGRLMMKNHSIEPFGKCNFIAGIKIAHLALKHRQNRNHKMRVVLFIGSPLEEIEMNELVKIAKKMKKEKVLCDVIMFGENESDGHEKFSTFVDTLNGKEGSGSSLIVVPQGSSLTDALLQSSVCKNEDGQAAFGGGGNGMDNAFGMDVENDPDLALALRVSMEEERARQAAAAAANGGAADSGADAEVAAAAAAVPLEEMDMGAMTEEQQLEWALRLSMQENAPAEQPQVQHEQMDVDGAPAVGGDNLDDLMNNPELLQQIVDDLPAANAEKDDDKEKK.

In terms of domain architecture, VWFA spans 5-190; it reads STMICVDNSE…LTDALLQSSV (186 aa). UIM domains follow at residues 216-235 and 273-292; these read ENDP…ERAR and TEEQ…NAPA. The tract at residues 290-346 is disordered; that stretch reads APAEQPQVQHEQMDVDGAPAVGGDNLDDLMNNPELLQQIVDDLPAANAEKDDDKEKK. Positions 337–346 are enriched in basic and acidic residues; that stretch reads AEKDDDKEKK.

This sequence belongs to the proteasome subunit S5A family. The 26S proteasome is composed of a core protease, known as the 20S proteasome, capped at one or both ends by the 19S regulatory complex (RC). The RC is composed of at least 18 different subunits in two subcomplexes, the base and the lid, which form the portions proximal and distal to the 20S proteolytic core, respectively. Broadly expressed with high expression in the pharynx, intestine, hypodermis and spermatheca and weak expression in the excretory cell, body wall muscle, vulva and somatic gonad.

The protein localises to the cytoplasm. Its subcellular location is the nucleus. Functionally, binds and presumably selects ubiquitin-conjugates for destruction. Required for protein degradation and ubiquitin-proteasome system (UBS) function and regulates proteasomal subunit expression. Involvement in UBS might be cell type specific. Regulator of the autophagy-lysosome pathway that may confer resistance to autophagy by regulating the expression of autophagy-related proteins such as lgg-1, and by regulating lysosome formation, possibly by modulating elt-2 activity. Required for fertility, sperm production, and sex determination through regulation of tra-2 protein. Plays a role in the elimination of paternal mitochondria in fertilized eggs. This Caenorhabditis elegans protein is 26S proteasome non-ATPase regulatory subunit 4.